Here is a 159-residue protein sequence, read N- to C-terminus: 2-C-methyl-D-erythritol 2,4-cyclodiphosphate synthase (159 aa).

Residues D10 and H12 each contribute to the a divalent metal cation site. 4-CDP-2-C-methyl-D-erythritol 2-phosphate-binding positions include 10–12 and 36–37; these read DVH and HS. H44 lines the a divalent metal cation pocket. Residues 58 to 60, 134 to 137, F141, and R144 contribute to the 4-CDP-2-C-methyl-D-erythritol 2-phosphate site; these read DIG and TTTE.

Belongs to the IspF family. Homotrimer. The cofactor is a divalent metal cation.

The enzyme catalyses 4-CDP-2-C-methyl-D-erythritol 2-phosphate = 2-C-methyl-D-erythritol 2,4-cyclic diphosphate + CMP. It participates in isoprenoid biosynthesis; isopentenyl diphosphate biosynthesis via DXP pathway; isopentenyl diphosphate from 1-deoxy-D-xylulose 5-phosphate: step 4/6. Functionally, involved in the biosynthesis of isopentenyl diphosphate (IPP) and dimethylallyl diphosphate (DMAPP), two major building blocks of isoprenoid compounds. Catalyzes the conversion of 4-diphosphocytidyl-2-C-methyl-D-erythritol 2-phosphate (CDP-ME2P) to 2-C-methyl-D-erythritol 2,4-cyclodiphosphate (ME-CPP) with a corresponding release of cytidine 5-monophosphate (CMP). The chain is 2-C-methyl-D-erythritol 2,4-cyclodiphosphate synthase from Bacteroides fragilis (strain YCH46).